Consider the following 299-residue polypeptide: Biotin transporter (299 aa).

Helical transmembrane passes span 2–22 (ALLI…GEYL), 26–46 (VDSY…FLPF), 56–76 (TISL…MLSF), 81–101 (YLTV…ITLI), 110–130 (LRWG…IIRY), 137–157 (FWVG…GMVG), 172–192 (AFAW…SLLG), 202–222 (LQWS…YFMW), 233–253 (TLGI…LAIW), and 256–276 (QPHW…LWVH). EamA domains are found at residues 3–128 (LLII…AGII) and 139–274 (VGLL…ASLW).

It belongs to the drug/metabolite transporter (DMT) superfamily. 10 TMS drug/metabolite exporter (DME) (TC 2.A.7.3) family.

It localises to the cell inner membrane. The catalysed reaction is biotin(in) = biotin(out). Its function is as follows. Uptake of biotin. The sequence is that of Biotin transporter from Salmonella typhi.